The chain runs to 333 residues: Glycerol-3-phosphate dehydrogenase [NAD(P)+] (333 aa).

Residues W13, K33, and K108 each contribute to the NADPH site. Sn-glycerol 3-phosphate contacts are provided by K108 and G138. S142 provides a ligand contact to NADPH. The sn-glycerol 3-phosphate site is built by K193, D246, S256, R257, and N258. K193 serves as the catalytic Proton acceptor. R257 lines the NADPH pocket. The NADPH site is built by V281 and E283.

This sequence belongs to the NAD-dependent glycerol-3-phosphate dehydrogenase family.

The protein resides in the cytoplasm. It carries out the reaction sn-glycerol 3-phosphate + NAD(+) = dihydroxyacetone phosphate + NADH + H(+). It catalyses the reaction sn-glycerol 3-phosphate + NADP(+) = dihydroxyacetone phosphate + NADPH + H(+). It functions in the pathway membrane lipid metabolism; glycerophospholipid metabolism. Catalyzes the reduction of the glycolytic intermediate dihydroxyacetone phosphate (DHAP) to sn-glycerol 3-phosphate (G3P), the key precursor for phospholipid synthesis. The sequence is that of Glycerol-3-phosphate dehydrogenase [NAD(P)+] from Bifidobacterium longum (strain NCC 2705).